We begin with the raw amino-acid sequence, 181 residues long: Putative ankyrin repeat protein RBE_0150 (181 aa).

4 ANK repeats span residues Ile50–Thr79, Leu83–Ala114, Ser118–Thr147, and Leu151–Tyr180.

The protein is Putative ankyrin repeat protein RBE_0150 of Rickettsia bellii (strain RML369-C).